An 88-amino-acid chain; its full sequence is MNIFGVGLPEVTVILILALLIFGPKKLPELGKQLGKTLKSLKKASNEFQNEIDQVMKEEDKDESPKSIESNQSNEINQEKIDSENSNN.

A helical membrane pass occupies residues 3 to 23 (IFGVGLPEVTVILILALLIFG). The segment covering 56 to 66 (MKEEDKDESPK) has biased composition (basic and acidic residues). The disordered stretch occupies residues 56–88 (MKEEDKDESPKSIESNQSNEINQEKIDSENSNN). The segment covering 67 to 76 (SIESNQSNEI) has biased composition (polar residues). Over residues 77-88 (NQEKIDSENSNN) the composition is skewed to basic and acidic residues.

This sequence belongs to the TatA/E family. As to quaternary structure, forms a complex with TatC.

The protein resides in the cell inner membrane. Functionally, part of the twin-arginine translocation (Tat) system that transports large folded proteins containing a characteristic twin-arginine motif in their signal peptide across membranes. TatA could form the protein-conducting channel of the Tat system. The protein is Sec-independent protein translocase protein TatA of Prochlorococcus marinus (strain MIT 9301).